Reading from the N-terminus, the 240-residue chain is MSNQPFKFKQFSIDQDRCAMKIGTDGVLLGAWASLEHFPDSILDIGTGTGLIALMLAQRSDAELIDALEIEENAYEQSVENFENSDWGDRLFCYHAAFDEFVEEMQDEEKYDLIISNPPFYSENYKTGDEYRDQARFADALPLTELIQGASHLLSENGHLDLIIPFSEERKALEITSSHNLFPNKITRVKGTANSPIKRSLISFNFQKSETVIDELTLEISRHHYTEEFKELVQDFYLKL.

Belongs to the methyltransferase superfamily. tRNA (adenine-N(6)-)-methyltransferase family.

It localises to the cytoplasm. It carries out the reaction adenosine(37) in tRNA1(Val) + S-adenosyl-L-methionine = N(6)-methyladenosine(37) in tRNA1(Val) + S-adenosyl-L-homocysteine + H(+). Functionally, specifically methylates the adenine in position 37 of tRNA(1)(Val) (anticodon cmo5UAC). In Christiangramia forsetii (strain DSM 17595 / CGMCC 1.15422 / KT0803) (Gramella forsetii), this protein is tRNA1(Val) (adenine(37)-N6)-methyltransferase.